The primary structure comprises 259 residues: Dihydroorotate dehydrogenase B (NAD(+)), electron transfer subunit (259 aa).

The 101-residue stretch at 2–102 (MQKQNMIVVN…LGPLGHGFPV (101 aa)) folds into the FAD-binding FR-type domain. FAD-binding positions include 53–56 (RPIS), 70–72 (LYR), and 77–78 (GT). Residues Cys221, Cys226, Cys229, and Cys246 each contribute to the [2Fe-2S] cluster site.

The protein belongs to the PyrK family. Heterotetramer of 2 PyrK and 2 PyrD type B subunits. Requires [2Fe-2S] cluster as cofactor. The cofactor is FAD.

The protein operates within pyrimidine metabolism; UMP biosynthesis via de novo pathway; orotate from (S)-dihydroorotate (NAD(+) route): step 1/1. Responsible for channeling the electrons from the oxidation of dihydroorotate from the FMN redox center in the PyrD type B subunit to the ultimate electron acceptor NAD(+). In Bacillus cereus (strain ZK / E33L), this protein is Dihydroorotate dehydrogenase B (NAD(+)), electron transfer subunit.